Reading from the N-terminus, the 152-residue chain is Ribonuclease pancreatic beta-type (152 aa).

Positions 1–25 are cleaved as a signal peptide; sequence MGLXKSFALFSLLVLVLGWVQPSLS. The interval 25 to 53 is disordered; the sequence is SGESRESSADKFKRQHMDPDSPSKSSPTY. Residues 27–45 show a composition bias toward basic and acidic residues; that stretch reads ESRESSADKFKRQHMDPDS. Residues lysine 35 and arginine 38 each contribute to the substrate site. The active-site Proton acceptor is the histidine 40. Cystine bridges form between cysteine 54–cysteine 112, cysteine 68–cysteine 123, cysteine 86–cysteine 138, and cysteine 93–cysteine 100. Substrate-binding positions include 69–73 and lysine 94; that span reads KRVNT. The Proton donor role is filled by histidine 147.

It belongs to the pancreatic ribonuclease family. In terms of assembly, monomer.

It localises to the secreted. The catalysed reaction is an [RNA] containing cytidine + H2O = an [RNA]-3'-cytidine-3'-phosphate + a 5'-hydroxy-ribonucleotide-3'-[RNA].. The enzyme catalyses an [RNA] containing uridine + H2O = an [RNA]-3'-uridine-3'-phosphate + a 5'-hydroxy-ribonucleotide-3'-[RNA].. Endonuclease that catalyzes the cleavage of RNA on the 3' side of pyrimidine nucleotides. Acts on single-stranded and double-stranded RNA. The protein is Ribonuclease pancreatic beta-type of Rattus tiomanicus (Malayan field rat).